The chain runs to 429 residues: Xaa-Pro dipeptidase (429 aa).

Mn(2+)-binding residues include aspartate 241, aspartate 252, histidine 334, glutamate 372, and glutamate 411.

This sequence belongs to the peptidase M24B family. Bacterial-type prolidase subfamily. Mn(2+) serves as cofactor.

The catalysed reaction is Xaa-L-Pro dipeptide + H2O = an L-alpha-amino acid + L-proline. Splits dipeptides with a prolyl residue in the C-terminal position. In Marinobacter nauticus (strain ATCC 700491 / DSM 11845 / VT8) (Marinobacter aquaeolei), this protein is Xaa-Pro dipeptidase.